A 573-amino-acid polypeptide reads, in one-letter code: Leucine aminopeptidase, chloroplastic (573 aa).

The N-terminal 53 residues, 1 to 53 (MATLRVSSLLASSPSSLHCNPSVFTKCQSSPRWAFSFSVTPLCSRRSKRIVHC), are a transit peptide targeting the chloroplast. Lysine 342 and aspartate 347 together coordinate Mn(2+). Lysine 354 is a catalytic residue. Residues aspartate 367, aspartate 427, and glutamate 429 each coordinate Mn(2+). Residue arginine 431 is part of the active site.

The protein belongs to the peptidase M17 family. Homohexamer (dimer of homotrimers). The cofactor is Mn(2+). In terms of tissue distribution, in tubers and floral buds of untreated plants. After abscisic acid (ABA) treatment or mechanical wounding is mostly accumulated in leaves, to a lesser extent in stems, but not in roots.

The protein localises to the plastid. The protein resides in the chloroplast. The catalysed reaction is Release of an N-terminal amino acid, Xaa-|-Yaa-, in which Xaa is preferably Leu, but may be other amino acids including Pro although not Arg or Lys, and Yaa may be Pro. Amino acid amides and methyl esters are also readily hydrolyzed, but rates on arylamides are exceedingly low.. It catalyses the reaction Release of N-terminal proline from a peptide.. Its function is as follows. Presumably involved in the processing and regular turnover of intracellular proteins. The protein is Leucine aminopeptidase, chloroplastic (LAP) of Solanum tuberosum (Potato).